A 540-amino-acid chain; its full sequence is Fumonisin B1 esterase (540 aa).

The Acyl-ester intermediate role is filled by Ser-240. Catalysis depends on charge relay system residues Glu-356 and His-448. The segment at 521 to 540 (QVGSGEGLGVSPSKACQPSK) is disordered.

The protein belongs to the type-B carboxylesterase/lipase family.

It carries out the reaction fumonisin B1 + 2 H2O = 2 tricarballylate + (2S,3S,5R,10R,12S,14S,15R,16R)-2-amino-12,16-dimethylicosane-3,5,10,14,15-pentol + 2 H(+). Its function is as follows. Involved in degradation of fumonisin B1. Catalyzes the hydrolysis of fumonisin B1 (FB1) to aminopentol (HFB1). This Sphingopyxis macrogoltabida (Sphingomonas macrogoltabidus) protein is Fumonisin B1 esterase (fumD).